Consider the following 1455-residue polypeptide: Nik-related protein kinase (1455 aa).

The Protein kinase domain maps to 25 to 313; sequence FSLDKAIGLG…SGNMLLHPFV (289 aa). ATP contacts are provided by residues 31 to 39 and K54; that span reads IGLGTYGRI. The Proton acceptor role is filled by D177. 2 disordered regions span residues 385 to 404 and 471 to 568; these read LHGEPPQPRWLPDQEDPQDQ and TQDN…EDKE. Residues 471 to 480 are compositionally biased toward polar residues; that stretch reads TQDNKATSPE. The span at 494 to 505 shows a compositional bias: basic and acidic residues; the sequence is EALETEQPKDLD. Low complexity predominate over residues 520–531; sequence QPRQGQAAEQQQ. Over residues 540–568 the composition is skewed to acidic residues; the sequence is PPEEDREPEQAEVQEEAVEPPQAEIEDKE. The stretch at 716-750 forms a coiled coil; the sequence is RRRHRRWEDIFNQHEEQLRRVENDREDDSSDNDEV. Disordered stretches follow at residues 760 to 854 and 1029 to 1080; these read IEPH…PPYS and AFGN…TETS. 2 positions are modified to phosphoserine: S847 and S850. Residues 1029-1038 show a composition bias toward low complexity; the sequence is AFGNHGANRG. Positions 1044 to 1078 are enriched in basic and acidic residues; that stretch reads RNREANGRNEENGAFGRDQHVFPEFEHEESDRGTE. The region spanning 1138-1425 is the CNH domain; it reads SSEVYCGSLW…RFLCARGDKM (288 aa).

It belongs to the protein kinase superfamily. STE Ser/Thr protein kinase family. STE20 subfamily.

The enzyme catalyses L-seryl-[protein] + ATP = O-phospho-L-seryl-[protein] + ADP + H(+). It catalyses the reaction L-threonyl-[protein] + ATP = O-phospho-L-threonyl-[protein] + ADP + H(+). In terms of biological role, may phosphorylate cofilin-1 and induce actin polymerization through this process, during the late stages of embryogenesis. Involved in the TNF-alpha-induced signaling pathway. This is Nik-related protein kinase (Nrk) from Mus musculus (Mouse).